The chain runs to 418 residues: Putative ion-transport protein YfeO (418 aa).

The next 12 membrane-spanning stretches (helical) occupy residues 10–30, 54–74, 99–119, 120–140, 149–169, 186–206, 223–243, 258–278, 300–320, 322–342, 343–363, and 386–406; these read LLLS…LIVV, DSPF…GLVI, ALPG…SLGP, EHPI…RLLP, ILAS…AALI, LFAP…FFHP, ILSG…AVWC, VLML…AGPV, DYFL…ASGF, GGRI…LHEH, VPAV…VLVV, and LLCI…IMMV.

The protein belongs to the chloride channel (TC 2.A.49) family.

The protein resides in the cell membrane. This is Putative ion-transport protein YfeO from Escherichia fergusonii (strain ATCC 35469 / DSM 13698 / CCUG 18766 / IAM 14443 / JCM 21226 / LMG 7866 / NBRC 102419 / NCTC 12128 / CDC 0568-73).